The primary structure comprises 347 residues: Transcription factor EC (347 aa).

The necessary for transcriptional transactivation stretch occupies residues 1–119 (MTLDHQIINP…GLTSASCPSS (119 aa)). The 54-residue stretch at 139–192 (QKKDNHNLIERRRRYNINYRIKELGTLIPKSNDPDMRWNKGTILKASVEYIKWL) folds into the bHLH domain. A necessary for transcriptional transactivation region spans residues 271–347 (PSPELCDQAI…SFSSDDGDEL (77 aa)). A disordered region spans residues 319 to 347 (DPLLSATSPAVSKESSRRSSFSSDDGDEL). The segment covering 326 to 341 (SPAVSKESSRRSSFSS) has biased composition (low complexity).

Belongs to the MiT/TFE family. Homodimer. Forms heterodimers with TFE3. Forms heterodimers with MITF. Interacts with MITF. As to expression, expressed moderately in spleen, kidney, bone marrow, small intestine and leukocytes. Expressed weakly in testis, trachea and colon.

The protein localises to the nucleus. Its function is as follows. Transcriptional regulator that acts as a repressor or an activator. Acts as a transcriptional repressor on minimal promoter containing element F (that includes an E-box sequence). Binds to element F in an E-box sequence-specific manner. Acts as a transcriptional transactivator on the proximal promoter region of the tartrate-resistant acid phosphatase (TRAP) E-box containing promoter. Collaborates with MITF in target gene activation. Acts as a transcriptional repressor on minimal promoter containing mu E3 enhancer sequence. Binds to mu E3 DNA sequence of the immunoglobulin heavy-chain gene enhancer. Binds DNA in a homo- or heterodimeric form. The protein is Transcription factor EC (TFEC) of Homo sapiens (Human).